A 258-amino-acid polypeptide reads, in one-letter code: Alpha- and beta-fibrinogenase stejnefibrase-1 (258 aa).

The N-terminal stretch at 1–18 (MELIRVLANLLILQLSYA) is a signal peptide. The propeptide occupies 19–24 (QKSSEL). Positions 25–249 (IIGGDECNID…HLDWIQNIIA (225 aa)) constitute a Peptidase S1 domain. 6 disulfide bridges follow: C31-C163, C50-C66, C98-C256, C142-C210, C174-C189, and C200-C225. The active-site Charge relay system is the H65. A glycan (N-linked (GlcNAc...) asparagine) is linked at N103. Residue D110 is the Charge relay system of the active site. N-linked (GlcNAc...) asparagine glycans are attached at residues N121, N122, N154, and N170. S204 (charge relay system) is an active-site residue.

This sequence belongs to the peptidase S1 family. Snake venom subfamily. In terms of assembly, monomer. As to expression, expressed by the venom gland.

The protein resides in the secreted. With respect to regulation, its activity is inhibited by PMSF and p-nitrophenyl-p-guanidinobenzoate (NPGB). In terms of biological role, snake venom serine protease. Degrades concomitantly alpha- (FGA) and beta-chains of fibrinogen (FGB). This is Alpha- and beta-fibrinogenase stejnefibrase-1 from Trimeresurus stejnegeri (Chinese green tree viper).